The chain runs to 779 residues: Subtilisin-like protease SBT3.18 (779 aa).

Residues 1 to 21 form the signal peptide; that stretch reads MYFWVMFFTLMIKVKLYITNG. A propeptide spans 22 to 109 (activation peptide); that stretch reads DIFQNRPTVY…VFKSKSLKLH (88 aa). An Inhibitor I9 domain is found at 30–109; sequence VYVVYLGANR…VFKSKSLKLH (80 aa). An N-linked (GlcNAc...) asparagine glycan is attached at Asn84. In terms of domain architecture, Peptidase S8 spans 113-621; sequence SWDFLGLAVD…AGHINPLKAM (509 aa). Catalysis depends on charge relay system residues Asp144 and His221. N-linked (GlcNAc...) asparagine glycans are attached at residues Asn236 and Asn406. Ser553 (charge relay system) is an active-site residue.

This sequence belongs to the peptidase S8 family.

Its subcellular location is the secreted. This Arabidopsis thaliana (Mouse-ear cress) protein is Subtilisin-like protease SBT3.18.